The following is a 424-amino-acid chain: Kynureninase (424 aa).

Pyridoxal 5'-phosphate-binding positions include Leu-106, Thr-107, 134–137 (FPSD), Asp-219, His-222, and Tyr-244. Lys-245 bears the N6-(pyridoxal phosphate)lysine mark. The pyridoxal 5'-phosphate site is built by Trp-274 and Asn-302.

This sequence belongs to the kynureninase family. Homodimer. Pyridoxal 5'-phosphate serves as cofactor.

It catalyses the reaction L-kynurenine + H2O = anthranilate + L-alanine + H(+). The catalysed reaction is 3-hydroxy-L-kynurenine + H2O = 3-hydroxyanthranilate + L-alanine + H(+). The protein operates within amino-acid degradation; L-kynurenine degradation; L-alanine and anthranilate from L-kynurenine: step 1/1. It functions in the pathway cofactor biosynthesis; NAD(+) biosynthesis; quinolinate from L-kynurenine: step 2/3. Its function is as follows. Catalyzes the cleavage of L-kynurenine (L-Kyn) and L-3-hydroxykynurenine (L-3OHKyn) into anthranilic acid (AA) and 3-hydroxyanthranilic acid (3-OHAA), respectively. The sequence is that of Kynureninase from Xanthomonas campestris pv. campestris (strain 8004).